The chain runs to 378 residues: Transcription initiation factor IIA subunit 1 (378 aa).

A2 bears the N-acetylalanine mark. 3 stretches are compositionally biased toward low complexity: residues 69 to 79 (QVQQQHQPQQQ), 89 to 106 (QQAQPQQTVPQQAQTQQV), and 247 to 281 (PAQAPMPAAGQQQPQAQPAQQQAPLVLQVDGTGDT). Disordered stretches follow at residues 69–108 (QVQQQHQPQQQQHHHHHHQHQQAQPQQTVPQQAQTQQVLI) and 247–331 (PAQA…QELF). Phosphoserine; by TAF1 occurs at positions 282, 283, 318, and 323. A compositionally biased stretch (acidic residues) spans 282-331 (SSEEDEDEEEDYDDDEEEDKEKDGAEDGQVEEEPLNSEDDVSDEEGQELF). Positions 345 and 346 each coordinate DNA.

Belongs to the TFIIA subunit 1 family. In terms of assembly, TFIIA is a heterodimer of the large unprocessed subunit 1 and a small subunit gamma. It was originally believed to be a heterotrimer of an alpha (p35), a beta (p19) and a gamma subunit (p12). TFIIA forms a complex with TBP. Part of TBP-based Pol II pre-initiation complex (PIC), in which Pol II core assembles with general transcription factors and other specific initiation factors including GTF2E1, GTF2E2, GTF2F1, GTF2F2, TCEA1, ERCC2, ERCC3, GTF2H2, GTF2H3, GTF2H4, GTF2H5, GTF2A1, GTF2A2, GTF2B and TBP; this large multi-subunit PIC complex mediates DNA unwinding and targets Pol II core to the transcription start site where the first phosphodiester bond forms. The alpha and beta subunits are postranslationally produced from the precursor form by TASP1. The cleavage promotes proteasomal degradation. Expressed in pachytene spermatocytes and spermatids.

It is found in the nucleus. Functionally, TFIIA is a component of the transcription machinery of RNA polymerase II and plays an important role in transcriptional activation. TFIIA in a complex with TBP mediates transcriptional activity. The sequence is that of Transcription initiation factor IIA subunit 1 (Gtf2a1) from Mus musculus (Mouse).